The sequence spans 887 residues: Probable alpha/beta-glucosidase agdC (887 aa).

Residues Met1 to Ala17 form the signal peptide. 3 N-linked (GlcNAc...) asparagine glycosylation sites follow: Asn171, Asn293, and Asn373. The Nucleophile role is filled by Asp422. Glu425 is a catalytic residue. The tract at residues Pro457–Val483 is disordered. Asp571 acts as the Proton donor in catalysis. Asn747 and Asn879 each carry an N-linked (GlcNAc...) asparagine glycan.

The protein belongs to the glycosyl hydrolase 31 family.

Its subcellular location is the secreted. The enzyme catalyses Hydrolysis of terminal, non-reducing (1-&gt;4)-linked alpha-D-glucose residues with release of alpha-D-glucose.. It catalyses the reaction Hydrolysis of terminal, non-reducing beta-D-glucosyl residues with release of beta-D-glucose.. Its function is as follows. Glucosidase involved in the degradation of cellulosic biomass. Has both alpha- and beta-glucosidase activity. This is Probable alpha/beta-glucosidase agdC (agdC) from Aspergillus clavatus (strain ATCC 1007 / CBS 513.65 / DSM 816 / NCTC 3887 / NRRL 1 / QM 1276 / 107).